We begin with the raw amino-acid sequence, 535 residues long: Xylan 1,3-beta-xylosidase (535 aa).

Catalysis depends on Asp-16, which acts as the Proton acceptor. The Proton donor role is filled by Glu-189.

This sequence belongs to the glycosyl hydrolase 43 family.

It catalyses the reaction Hydrolysis of successive xylose residues from the non-reducing termini of (1-&gt;3)-beta-D-xylans.. With respect to regulation, inhibited by Ag(+), Cu(2+), Hg(2+), Mn(2+), Pb(2+), Zn(2+) and p-chloromercuric benzoic acid. In terms of biological role, beta-1,3-xylosidase that hydrolyzes beta-1,3-xylooligosaccharides to D-xylose. This Vibrio sp protein is Xylan 1,3-beta-xylosidase (xloA).